The primary structure comprises 65 residues: Large ribosomal subunit protein bL35 (65 aa).

The disordered stretch occupies residues 1–22; the sequence is MPKIKTVRGAAKRFKKTGKGGF. Residues 10 to 22 are compositionally biased toward basic residues; it reads AAKRFKKTGKGGF.

This sequence belongs to the bacterial ribosomal protein bL35 family.

The sequence is that of Large ribosomal subunit protein bL35 from Klebsiella pneumoniae (strain 342).